The following is a 215-amino-acid chain: UPF0502 protein YceH (215 aa).

The residue at position 80 (Lys-80) is an N6-acetyllysine.

It belongs to the UPF0502 family.

The sequence is that of UPF0502 protein YceH from Shigella flexneri serotype 5b (strain 8401).